We begin with the raw amino-acid sequence, 166 residues long: NAD(P)H-quinone oxidoreductase subunit I, chloroplastic (166 aa).

2 4Fe-4S ferredoxin-type domains span residues 55–84 and 95–124; these read GRIH…VDWK and LNYS…MTEE. C64, C67, C70, C74, C104, C107, C110, and C114 together coordinate [4Fe-4S] cluster.

This sequence belongs to the complex I 23 kDa subunit family. NDH is composed of at least 16 different subunits, 5 of which are encoded in the nucleus. [4Fe-4S] cluster is required as a cofactor.

It is found in the plastid. The protein localises to the chloroplast thylakoid membrane. It catalyses the reaction a plastoquinone + NADH + (n+1) H(+)(in) = a plastoquinol + NAD(+) + n H(+)(out). The catalysed reaction is a plastoquinone + NADPH + (n+1) H(+)(in) = a plastoquinol + NADP(+) + n H(+)(out). Its function is as follows. NDH shuttles electrons from NAD(P)H:plastoquinone, via FMN and iron-sulfur (Fe-S) centers, to quinones in the photosynthetic chain and possibly in a chloroplast respiratory chain. The immediate electron acceptor for the enzyme in this species is believed to be plastoquinone. Couples the redox reaction to proton translocation, and thus conserves the redox energy in a proton gradient. This chain is NAD(P)H-quinone oxidoreductase subunit I, chloroplastic, found in Stevia rebaudiana (Stevia).